Here is a 114-residue protein sequence, read N- to C-terminus: Thioredoxin H1 (114 aa).

At Ala-2 the chain carries N-acetylalanine. Positions 2–114 constitute a Thioredoxin domain; that stretch reads ASEEGQVIAC…LQSTIAKHLA (113 aa). Residues Cys-40 and Cys-43 each act as nucleophile in the active site. Cys-40 and Cys-43 are disulfide-bonded.

The protein belongs to the thioredoxin family. Plant H-type subfamily. As to quaternary structure, interacts with FBA6. Interacts with MDH1.

The protein resides in the cytoplasm. In terms of biological role, thiol-disulfide oxidoreductase involved in the redox regulation of a number of cytosolic enzymes. Activates the cytosolic malate dehydrogenase (MDH) probably by reducing an interchain disulfide bond of the inactive MDH homodimer. Possesses insulin disulfide bonds reducing activity. The polypeptide is Thioredoxin H1 (TRX1) (Arabidopsis thaliana (Mouse-ear cress)).